The chain runs to 335 residues: Aspartate--ammonia ligase (335 aa).

This sequence belongs to the class-II aminoacyl-tRNA synthetase family. AsnA subfamily.

It is found in the cytoplasm. The enzyme catalyses L-aspartate + NH4(+) + ATP = L-asparagine + AMP + diphosphate + H(+). The protein operates within amino-acid biosynthesis; L-asparagine biosynthesis; L-asparagine from L-aspartate (ammonia route): step 1/1. This chain is Aspartate--ammonia ligase, found in Levilactobacillus brevis (strain ATCC 367 / BCRC 12310 / CIP 105137 / JCM 1170 / LMG 11437 / NCIMB 947 / NCTC 947) (Lactobacillus brevis).